The primary structure comprises 276 residues: Large ribosomal subunit protein uL2 (276 aa).

Residues 219–268 (TVRGSVMNPNDHPHGGGEGRQPVGRKSPMTPWGKPALGLKTRNKKAKSSK) form a disordered region.

Belongs to the universal ribosomal protein uL2 family. In terms of assembly, part of the 50S ribosomal subunit. Forms a bridge to the 30S subunit in the 70S ribosome.

One of the primary rRNA binding proteins. Required for association of the 30S and 50S subunits to form the 70S ribosome, for tRNA binding and peptide bond formation. It has been suggested to have peptidyltransferase activity; this is somewhat controversial. Makes several contacts with the 16S rRNA in the 70S ribosome. This Lactococcus lactis subsp. cremoris (strain MG1363) protein is Large ribosomal subunit protein uL2.